Consider the following 500-residue polypeptide: NAD(P)H-quinone oxidoreductase chain 4, chloroplastic (500 aa).

The next 15 membrane-spanning stretches (helical) occupy residues 4 to 24 (FPWL…MLFL), 35 to 55 (YTIC…CYNF), 87 to 107 (IGTI…AFPV), 113 to 130 (LFHF…GSFS), 134 to 154 (LLLF…LLAM), 167 to 187 (FILY…GISL), 211 to 231 (ILFY…IPLH), 242 to 262 (HYST…YGLV), 272 to 292 (AHSM…IYAA), 305 to 325 (IAYS…SITD), 330 to 350 (GAIL…FLAG), 364 to 384 (MGGM…LSMA), 386 to 406 (LALP…GIIT), 411 to 431 (FLIF…LTPI), and 462 to 482 (LFLS…PDFV).

Belongs to the complex I subunit 4 family.

Its subcellular location is the plastid. It localises to the chloroplast thylakoid membrane. It catalyses the reaction a plastoquinone + NADH + (n+1) H(+)(in) = a plastoquinol + NAD(+) + n H(+)(out). It carries out the reaction a plastoquinone + NADPH + (n+1) H(+)(in) = a plastoquinol + NADP(+) + n H(+)(out). The polypeptide is NAD(P)H-quinone oxidoreductase chain 4, chloroplastic (Capsella bursa-pastoris (Shepherd's purse)).